Consider the following 520-residue polypeptide: GMP synthase [glutamine-hydrolyzing] (520 aa).

The Glutamine amidotransferase type-1 domain occupies 9–202 (TILIIDFGSQ…VHRIVGVKPG (194 aa)). Cysteine 86 acts as the Nucleophile in catalysis. Residues histidine 176 and glutamate 178 contribute to the active site. Residues 203-395 (WTMGAYREQA…LGLPDSFIGR (193 aa)) enclose the GMPS ATP-PPase domain. Position 230–236 (230–236 (SGGVDSS)) interacts with ATP.

In terms of assembly, homodimer.

The catalysed reaction is XMP + L-glutamine + ATP + H2O = GMP + L-glutamate + AMP + diphosphate + 2 H(+). Its pathway is purine metabolism; GMP biosynthesis; GMP from XMP (L-Gln route): step 1/1. In terms of biological role, catalyzes the synthesis of GMP from XMP. The protein is GMP synthase [glutamine-hydrolyzing] of Brucella abortus (strain S19).